Consider the following 167-residue polypeptide: MALLNILQYPDERLHTVAKPVEQVDERIRKLVADMFETMYESRGIGLAATQVDVHERVVVMDLTEDRSEPRVFINPVIVEKDGETTYEEGCLSVPGIYDAVTRAERVKVEALNEKGEKFTLEADGLLAICVQHELDHLMGIVFVERLSQLKQGRIKTKLKKRQKHTI.

Residues cysteine 91 and histidine 133 each coordinate Fe cation. Residue glutamate 134 is part of the active site. Histidine 137 contributes to the Fe cation binding site.

It belongs to the polypeptide deformylase family. It depends on Fe(2+) as a cofactor.

The catalysed reaction is N-terminal N-formyl-L-methionyl-[peptide] + H2O = N-terminal L-methionyl-[peptide] + formate. Removes the formyl group from the N-terminal Met of newly synthesized proteins. Requires at least a dipeptide for an efficient rate of reaction. N-terminal L-methionine is a prerequisite for activity but the enzyme has broad specificity at other positions. The protein is Peptide deformylase of Neisseria gonorrhoeae (strain ATCC 700825 / FA 1090).